Here is a 153-residue protein sequence, read N- to C-terminus: Proline-rich membrane anchor 1 (153 aa).

An N-terminal signal peptide occupies residues Met-1–Ala-35. At Glu-36–Gly-92 the chain is on the extracellular side. One can recognise a PRAD domain in the interval Pro-56–Pro-70. The segment covering Pro-59–Arg-71 has biased composition (pro residues). The segment at Pro-59–Asn-79 is disordered. The N-linked (GlcNAc...) asparagine glycan is linked to Asn-79. Residues Leu-93–Ile-113 traverse the membrane as a helical segment. Topologically, residues Cys-114 to Val-153 are cytoplasmic. The segment at Ala-133–Val-153 is disordered.

As to quaternary structure, interacts with ACHE, probably through disulfide bonds. Isoforms 1 and 2 are expressed in the adult brain. In matured cortical neurons, only isoform 1 is detectable.

It is found in the cell membrane. The protein localises to the cell junction. Its subcellular location is the synapse. Its function is as follows. Required to anchor acetylcholinesterase (ACHE) to the basal lamina of the neuromuscular junction and to the membrane of neuronal synapses in brain. Organizes ACHE into tetramers. This Rattus norvegicus (Rat) protein is Proline-rich membrane anchor 1 (Prima1).